We begin with the raw amino-acid sequence, 207 residues long: GTP cyclohydrolase 1 (207 aa).

C88, H91, and C162 together coordinate Zn(2+).

The protein belongs to the GTP cyclohydrolase I family. In terms of assembly, toroid-shaped homodecamer, composed of two pentamers of five dimers.

The catalysed reaction is GTP + H2O = 7,8-dihydroneopterin 3'-triphosphate + formate + H(+). It functions in the pathway cofactor biosynthesis; 7,8-dihydroneopterin triphosphate biosynthesis; 7,8-dihydroneopterin triphosphate from GTP: step 1/1. The chain is GTP cyclohydrolase 1 from Sulfurisphaera tokodaii (strain DSM 16993 / JCM 10545 / NBRC 100140 / 7) (Sulfolobus tokodaii).